Reading from the N-terminus, the 268-residue chain is Phosphate import ATP-binding protein PstB 3 (268 aa).

The 240-residue stretch at 15–254 (LRTENLNVYY…DATESIFNNP (240 aa)) folds into the ABC transporter domain. 47 to 54 (GPSGCGKS) contributes to the ATP binding site.

The protein belongs to the ABC transporter superfamily. Phosphate importer (TC 3.A.1.7) family. The complex is composed of two ATP-binding proteins (PstB), two transmembrane proteins (PstC and PstA) and a solute-binding protein (PstS).

It localises to the cell inner membrane. The catalysed reaction is phosphate(out) + ATP + H2O = ADP + 2 phosphate(in) + H(+). Part of the ABC transporter complex PstSACB involved in phosphate import. Responsible for energy coupling to the transport system. The chain is Phosphate import ATP-binding protein PstB 3 from Nostoc sp. (strain PCC 7120 / SAG 25.82 / UTEX 2576).